A 584-amino-acid polypeptide reads, in one-letter code: Alpha-glucosidase MAL32 (584 aa).

Aspartate 214 serves as the catalytic Nucleophile. Residue glutamate 276 is the Proton donor of the active site.

This sequence belongs to the glycosyl hydrolase 13 family.

It carries out the reaction Hydrolysis of terminal, non-reducing (1-&gt;4)-linked alpha-D-glucose residues with release of alpha-D-glucose.. This is Alpha-glucosidase MAL32 (MAL32) from Saccharomyces cerevisiae (strain ATCC 204508 / S288c) (Baker's yeast).